Consider the following 251-residue polypeptide: MAASLQSANPTLSRTLASPNKPSSFATFRSPFLRFNSTSVASNFKPLVSREASSSFVTRSAAEPQERKTFHGLCYVVGDNIDTDQIIPAEFLTLVPSNPEEYEKLGSYALVGLPASYKERFVQPGEMKTKYSIIIGGENFGCGSSREHAPVCLGAAGAKAVVAQSYARIFFRNSVATGEVYPLDSEVRVCDECTTGDVATVELREGDSILINHTTGKEYKLKPIGDAGPVIDAGGIFAYARKAGMIPSAAA.

Residues 1–59 (MAASLQSANPTLSRTLASPNKPSSFATFRSPFLRFNSTSVASNFKPLVSREASSSFVTR) constitute a chloroplast transit peptide.

It belongs to the LeuD family. Heterodimer of the large LEUC/IIL1 subunit and the small LEUD (SSU1, SSU2 or SSU3) subunits. In terms of tissue distribution, expressed at low levels in roots, root tips, at the basis of the hypocotyls, and in emerging leaves. In young seedlings, expressed in cotyledon epidermal cells. In hypocotyls, expressed in peripheral cells. In seedling roots, expressed in the epidermis, including root hairs, and throughout the cortex. In rosette leaves, expressed in the upper and lower epidermis. In roots of adult plants, expressed in the root tips and cortex of the mature root enclosing the stele. In flowering stalks, expressed in the epidermis. Expressed in the carpel epidermis.

The protein resides in the plastid. It is found in the chloroplast stroma. The enzyme catalyses (2R,3S)-3-isopropylmalate = (2S)-2-isopropylmalate. It functions in the pathway amino-acid biosynthesis; L-leucine biosynthesis; L-leucine from 3-methyl-2-oxobutanoate: step 2/4. Functionally, catalyzes the isomerization between 2-isopropylmalate and 3-isopropylmalate, via the formation of 2-isopropylmaleate. Plays an essential role in leucine biosynthesis. Functions in both the biosynthesis of leucine, and in the methionine chain elongation pathway of aliphatic glucosinolate formation. Plays an essential role in female gametophyte development. This chain is 3-isopropylmalate dehydratase small subunit 1, found in Arabidopsis thaliana (Mouse-ear cress).